We begin with the raw amino-acid sequence, 192 residues long: Cytochrome b-245 light chain (192 aa).

Topologically, residues 2–7 (GQIEWA) are cytoplasmic. A helical membrane pass occupies residues 8 to 30 (MWANEQALASGLILITGGIVATA). The Extracellular segment spans residues 31–35 (GRFTQ). The helical transmembrane segment at 36 to 53 (WYFGAYSIAAGVLICLLE) threads the bilayer. The Cytoplasmic segment spans residues 54 to 69 (YPRGKRKKGSTMERCG). An intramembrane segment occupies 70–80 (QKYLTSVVKLF). The Cytoplasmic portion of the chain corresponds to 81–86 (GPLTRN). A helical membrane pass occupies residues 87-104 (YYVRAALHFLLSVPAGFL). Residue Leu105 is a topological domain, extracellular. Residues 106 to 126 (ATILGTVCLAIASVIYLLAAI) traverse the membrane as a helical segment. The Cytoplasmic portion of the chain corresponds to 127–192 (RGEQWTPIEP…NPMPVTDEVV (66 aa)). The tract at residues 134-192 (IEPKPKERPQVGGTIKQPPTNPPPRPPAEVRKKPSEGEEEAASAGGPQVNPMPVTDEVV) is disordered. Thr147 is modified (phosphothreonine). Lys149 participates in a covalent cross-link: Glycyl lysine isopeptide (Lys-Gly) (interchain with G-Cter in ubiquitin). 2 positions are modified to phosphoserine: Ser168 and Ser176.

Belongs to the p22phox family. In terms of assembly, component of the phagocyte NADPH oxidase core complex/cytochrome b558 complex, composed of CYBB (heavy chain (beta)) and CYBA (light chain (alpha)). Component of the phagocyte NADPH oxidase complex composed of an obligatory core heterodimer formed by the membrane proteins CYBA and CYBB and the cytosolic regulatory subunits NCF1/p47-phox, NCF2/p67-phox, NCF4/p40-phox and the small GTPase RAC1 or RAC2. Interacts with NCF1 (via SH3 domain). Interacts with SH3PXD2A. Interacts with DUOX1, DUOX2 and TPO. Interacts with NOX4; this interaction mediates superoxide generation. Interacts with calprotectin (S100A8/9). Interacts with GBP7. Interacts with NOXO1. Forms a heterodimer with NOX3 and is essential for activity and cell membrane localization of NOX3. Interacts with NOX1. Ubiquitinated at Lys-149 likely by RNF145. Post-translationally, phosphorylation at Thr-147 enhances NADPH oxidase activity by promoting NCF1/p47-phox binding. The strongest level of expression is found in kidney, peritoneal neutrophils and peritoneal macrophages, and a lower level in spleen and small intestine. Very low level of expression can be noted in brain, liver, testis, and heart.

Its subcellular location is the cell membrane. In terms of biological role, subunit of NADPH oxidase complexes that is required for the NADPH oxidase activity that generates, in various cell types, superoxide from molecular oxygen utilizing NADPH as an electron donor. Subunit of the phagocyte NADPH oxidase complex that mediates the transfer of electrons from cytosolic NADPH to O2 to produce the superoxide anion (O2(-)). In the activated complex, electrons are first transferred from NADPH to flavin adenine dinucleotide (FAD) and subsequently transferred via two heme molecules to molecular oxygen, producing superoxide through an outer-sphere reaction. Activation of the NADPH oxidase complex is initiated by the assembly of cytosolic subunits of the NADPH oxidase complex with the core NADPH oxidase complex to form a complex at the plasma membrane or phagosomal membrane. This activation process is initiated by phosphorylation dependent binding of the cytosolic NCF1/p47-phox subunit to the C-terminus of CYBA/p22-phox. Aassociates with NOX3 to form a functional NADPH oxidase constitutively generating superoxide. The sequence is that of Cytochrome b-245 light chain from Mus musculus (Mouse).